The chain runs to 76 residues: Antimicrobial peptide lumbricin-1 (76 aa).

The propeptide at 1–14 is removed in mature form; it reads MSLCISDYLYLTLT.

Its function is as follows. Displays antimicrobial activity against the Gram-positive bacteria B.subtilis ATCC 62037, S.aureus ATCC 15752 and S.mutans ATCC 25175, the Gram-negative bacteria E.coli ATCC 27325, P.putida ATCC 17426 and Serratia sp. ATCC 21074, and the fungi C.albicans ATCC 10231, C.neoformans ATCC 34881 and S.cerevisiae ATCC 44774. Does not possess hemolytic activity. The polypeptide is Antimicrobial peptide lumbricin-1 (Lumbricus rubellus (Humus earthworm)).